The chain runs to 514 residues: Cardiolipin synthase 2 (514 aa).

Helical transmembrane passes span 7 to 27, 41 to 61, and 71 to 91; these read LIFF…FIDV, ILGI…CVIF, and LTWL…YLLF. 2 PLD phosphodiesterase domains span residues 249 to 276 and 427 to 454; these read INYR…GDEY and EKGF…DMRS. Active-site residues include H254, K256, D261, H432, K434, and D439.

Belongs to the phospholipase D family. Cardiolipin synthase subfamily.

It localises to the cell membrane. The catalysed reaction is 2 a 1,2-diacyl-sn-glycero-3-phospho-(1'-sn-glycerol) = a cardiolipin + glycerol. Functionally, catalyzes the reversible phosphatidyl group transfer from one phosphatidylglycerol molecule to another to form cardiolipin (CL) (diphosphatidylglycerol) and glycerol. This is Cardiolipin synthase 2 (cls2) from Bacillus cereus (strain ATCC 14579 / DSM 31 / CCUG 7414 / JCM 2152 / NBRC 15305 / NCIMB 9373 / NCTC 2599 / NRRL B-3711).